We begin with the raw amino-acid sequence, 132 residues long: MAMTDPIADMLTRIRNAGLAKHQKCDMPASNVKLAIVNVLKELGYIKNFKQISDDKQGILRIYLKFDNENKHIIHAIDRVSTPGCRVYVGKDEIPVVKNGLGNAILSTSKGVMHDAAAREAQLGGEVLCSVW.

Belongs to the universal ribosomal protein uS8 family. Part of the 30S ribosomal subunit. Contacts proteins S5 and S12.

In terms of biological role, one of the primary rRNA binding proteins, it binds directly to 16S rRNA central domain where it helps coordinate assembly of the platform of the 30S subunit. This chain is Small ribosomal subunit protein uS8, found in Syntrophotalea carbinolica (strain DSM 2380 / NBRC 103641 / GraBd1) (Pelobacter carbinolicus).